The primary structure comprises 304 residues: Probable 5-dehydro-4-deoxyglucarate dehydratase (304 aa).

The protein belongs to the DapA family.

The catalysed reaction is 5-dehydro-4-deoxy-D-glucarate + H(+) = 2,5-dioxopentanoate + CO2 + H2O. Its pathway is carbohydrate acid metabolism; D-glucarate degradation; 2,5-dioxopentanoate from D-glucarate: step 2/2. The chain is Probable 5-dehydro-4-deoxyglucarate dehydratase from Rhodococcus jostii (strain RHA1).